The following is a 377-amino-acid chain: Glycine oxidase (377 aa).

Residues 14–15 (VI), 34–35 (EK), 42–43 (AS), 47–49 (AGM), and Val180 each bind FAD. Substrate-binding residues include Arg309 and Arg336. 334-340 (HYRNGIL) is a binding site for FAD.

This sequence belongs to the DAO family. ThiO subfamily. Homotetramer. FAD is required as a cofactor.

The enzyme catalyses glycine + O2 + H2O = glyoxylate + H2O2 + NH4(+). It catalyses the reaction N-ethylglycine + O2 + H2O = ethylamine + glyoxylate + H2O2. It carries out the reaction sarcosine + O2 + H2O = methylamine + glyoxylate + H2O2. The catalysed reaction is D-alanine + O2 + H2O = pyruvate + H2O2 + NH4(+). It participates in cofactor biosynthesis; thiamine diphosphate biosynthesis. With respect to regulation, is inhibited at high substrate concentration. Catalyzes the FAD-dependent oxidative deamination of various amines and D-amino acids to yield the corresponding alpha-keto acids, ammonia/amine, and hydrogen peroxide. Oxidizes glycine, sarcosine (N-methylglycine), N-ethylglycine, D-proline, D-alanine, glycine-ethyl ester, and some other D-amino acids. Does not act on L-proline. Is essential for thiamine biosynthesis since the oxidation of glycine catalyzed by ThiO generates the glycine imine intermediate (dehydroglycine) required for the biosynthesis of the thiazole ring of thiamine pyrophosphate. In Geobacillus kaustophilus (strain HTA426), this protein is Glycine oxidase.